The sequence spans 218 residues: MEPGFWHEKWHQQQIGFHQQDINPFLVKYWQQLGLPADTQVFVPLCGKSLDMCFLAEQGHQVIGCELNELAVQQFFSDNQLEMTQTTVGEHQHYQTEQISLYQGDIFTLPNAITQEVTAFYDRAALIAWPESMRAQYAKQLASLLPSGSVGLLVTLDYPQEALIGPPFAVSPTWVEQHLSDDFDIEVLASQDVLADNPRFIKKAVPWLNEAAYLLKRK.

S-adenosyl-L-methionine contacts are provided by tryptophan 10, leucine 45, glutamate 66, and arginine 123.

Belongs to the class I-like SAM-binding methyltransferase superfamily. TPMT family.

It localises to the cytoplasm. It catalyses the reaction S-adenosyl-L-methionine + a thiopurine = S-adenosyl-L-homocysteine + a thiopurine S-methylether.. This Shewanella baltica (strain OS155 / ATCC BAA-1091) protein is Thiopurine S-methyltransferase.